The chain runs to 449 residues: MSKVASLDAFLTKVAQRDGYQPEFLQAVREVFTSIWPFLEANPKYRSEALLERLVEPERAFQFRVAWTDDKGQVQVNRAFRVQFNSAIGPFKGGMRFHPSVNLSILKFLGFEQIFKNALTTLPMGGAKGGSDFDPKGKSDAEVMRFCQALMAELYRHVGADTDVPAGDIGVGGREVGYLAGYMKKLSNQSACVFTGRGLSFGGSLIRPEATGYGLIYFAQAMLAEKGDSFAGKVVSVSGSGNVAQYAIEKALSLGAKVVTCSDSSGYVYDPNGFTTEKLAALFDIKNTKRGRVKDYAEQFGLQYFEGKRPWEVQVDIALPCATQNELELSDAQRLIKNGVKLVAEGANMPTTIEATEALLAADVLFGPGKAANAGGVATSGLEMAQSSQRLYWTAEEVDAQLHRIMLDIHANCKKYGTIEGQENINYVVGANVAGFVKVADAMLAQGVY.

Residues lysine 92, glutamine 113, and lysine 116 each contribute to the substrate site. Catalysis depends on lysine 128, which acts as the Proton donor. Position 167 (glycine 167) interacts with substrate. Residues threonine 211 and asparagine 242 each contribute to the NADP(+) site. Serine 380 is a binding site for substrate.

Belongs to the Glu/Leu/Phe/Val dehydrogenases family. As to quaternary structure, homohexamer.

It catalyses the reaction L-glutamate + NADP(+) + H2O = 2-oxoglutarate + NH4(+) + NADPH + H(+). Catalyzes the reversible oxidative deamination of glutamate to alpha-ketoglutarate and ammonia. This is NADP-specific glutamate dehydrogenase (gdhA) from Haemophilus influenzae (strain ATCC 51907 / DSM 11121 / KW20 / Rd).